A 341-amino-acid polypeptide reads, in one-letter code: D-aspartate oxidase (341 aa).

FAD is bound by residues Asp36, Arg37, Thr43, Ser44, Met50, Gly307, Ile311, and Ser312. Residues 339–341 carry the Microbody targeting signal motif; sequence SKL.

It belongs to the DAMOX/DASOX family. As to quaternary structure, dimer or tetramer. Interacts with PEX5; the interaction is direct and required for localization of DDO to the peroxisome. It depends on FAD as a cofactor. As to expression, expressed in the small intestine (at protein level). Expressed in the ependymal cell layer of the telencephalic ventricles, hippocampus, thalamus, cerebellum, midbrain region, pons, olfactory bulbs, and cortex. Repressed in the testis. In terms of tissue distribution, expressed in the kidney, liver, stomach, pancreas, uterus, lactating breast, involuting mammary gland, brain, heart, lung, and skin. Expressed in kidney, liver, pancreas, and in the mammary gland regardless of lactation status.

The protein resides in the peroxisome matrix. Its subcellular location is the cytoplasm. The protein localises to the cytosol. It catalyses the reaction D-aspartate + O2 + H2O = oxaloacetate + H2O2 + NH4(+). The enzyme catalyses D-glutamate + O2 + H2O = H2O2 + 2-oxoglutarate + NH4(+). Its activity is regulated as follows. Inhibited by the benzodiazepine olanzapine; chronic systemic administration of the benzodiazepine increases levels of D-aspartate and L-glutamate in the prefrontal cortex. Efficiently inhibited by 5-aminonicotinic acid (5-AN) and 1,4-Dihydropyrido[2,3-b]pyrazine-2,3-dione (DPPD). Inhibited by aminooxyacetic acid, thiolactomycin, anthranilic acid, malonate, meso-tartrate and L-tartrate. Benzoate has no effect on activity. Selectively catalyzes the oxidative deamination of acidic amino acids. Suppresses the level of D-aspartate in the brain, an amino acid that can act as an agonist for glutamate receptors. Protects the organism from the toxicity of D-amino acids. May also function in the intestine. Functionally, selectively catalyzes the oxidative deamination of acidic amino acids. Its function is as follows. Does not exhibit D-aspartate oxidase activity. In Mus musculus (Mouse), this protein is D-aspartate oxidase (Ddo).